Here is a 341-residue protein sequence, read N- to C-terminus: HTH-type transcriptional repressor PurR (341 aa).

The 55-residue stretch at 2 to 56 (ATIKDVAKRANVSTTTVSHVINKTRFVAEETRNAVWAAIKELHYSPSAVARSLKV) folds into the HTH lacI-type domain. The H-T-H motif DNA-binding region spans 4-23 (IKDVAKRANVSTTTVSHVIN). A DNA-binding region spans residues 48–56 (SAVARSLKV). 5 residues coordinate hypoxanthine: Y73, R190, T192, F221, and D275.

In terms of assembly, homodimer.

It functions in the pathway purine metabolism; purine nucleotide biosynthesis [regulation]. Functionally, is the main repressor of the genes involved in the de novo synthesis of purine nucleotides, regulating purB, purC, purEK, purF, purHD, purL, purMN and guaBA expression. In addition, it participates in the regulation or coregulation of genes involved in de novo pyrimidine nucleotide biosynthesis, salvage and uptake (pyrC, pyrD, carAB and codBA), and of several genes encoding enzymes necessary for nucleotide and polyamine biosynthesis (prsA, glyA, gcvTHP, speA, glnB). Binds to a 16-bp palindromic sequence located within the promoter region of pur regulon genes. The consensus binding sequence is 5'-ACGCAAACGTTTTCNT-3'. PurR is allosterically activated to bind its cognate DNA by binding the purine corepressors, hypoxanthine or guanine, thereby effecting transcription repression. The chain is HTH-type transcriptional repressor PurR (purR) from Escherichia coli (strain K12).